A 637-amino-acid polypeptide reads, in one-letter code: Neuroendocrine convertase 2 (637 aa).

The N-terminal stretch at 1 to 24 (MEGGCGSQWKAAGLLFCVMVFASA) is a signal peptide. Positions 25–108 (ERPVFTNHFL…QQEGFDRKKR (84 aa)) are excised as a propeptide. Residues 128-452 (QWYLFNTGQA…YGVLDAGAMV (325 aa)) enclose the Peptidase S8 domain. Catalysis depends on charge relay system residues D166 and H207. Disulfide bonds link C224–C375 and C316–C346. Residue N374 is glycosylated (N-linked (GlcNAc...) asparagine). S383 (charge relay system) is an active-site residue. In terms of domain architecture, P/Homo B spans 460–596 (TVPERFHCVG…TLMLHGTQSA (137 aa)). A disulfide bond links C467 and C493. 2 N-linked (GlcNAc...) asparagine glycosylation sites follow: N513 and N523.

It belongs to the peptidase S8 family. Furin subfamily.

It localises to the cytoplasmic vesicle. The protein resides in the secretory vesicle. It is found in the secreted. It catalyses the reaction Release of protein hormones and neuropeptides from their precursors, generally by hydrolysis of -Lys-Arg-|- bonds.. Its function is as follows. Serine endopeptidase which is involved in the processing of hormone and other protein precursors at sites comprised of pairs of basic amino acid residues. Responsible for the release of glucagon from proglucagon in pancreatic A cells. In Rattus norvegicus (Rat), this protein is Neuroendocrine convertase 2 (Pcsk2).